The primary structure comprises 504 residues: MTRTLSADADTRTATPPLMYVNGEWLPARSGATFPTIEPSTGRPITEIPRGDSSDVDAAVKAAADVAVEWQFTDAITRAALLRRLAELVAENAEELARIESLDSGHYLAKARELVTAIPLWLEYWAGAADKVGGRTIAVPGNKLSFTLLEPLGVTAHIIPWNYPLLILARSIAPALALGNTCVVKPAEDTSLSALKFAELVHAAGFPAGVFNVVTGYGSEAGAALAAHPEVRGITFTGSTETGREIARLGGQHIAQVNLELGGKSPLVVFPDAPLEDAVEVAVQGFCSRAGQVCVAGSRLFLHEDIADRFLEMLVSRLETVTVGDPFDGATQMGPLASKKHYDRVREYIEVGKQEATLLYGGGRPTDTPDDGFFVEPTVFVDVATDARIAREEIFGPVTAVMRWSSVDDLIATINDSEFGLFAVLWCRDITSALDTAKRLQVGSVMINDWFGELPMTPHGGHKQSGTGREEGLEAVHGYTQVKHIGINLEPSPAKSADWAGAPL.

E260 acts as the Proton acceptor in catalysis. C294 acts as the Nucleophile in catalysis.

The protein belongs to the aldehyde dehydrogenase family.

The protein localises to the cytoplasm. It catalyses the reaction 2-hydroxy-2-methylpropanal + NAD(+) + H2O = 2-hydroxy-2-methylpropanoate + NADH + 2 H(+). Involved in the degradation of methyl tert-butyl ether (MTBE). Catalyzes the conversion of hydroxyisobutyraldehyde to hydroxyisobutyric acid (HIBA). The polypeptide is Hydroxyisobutyraldehyde dehydrogenase (Mycolicibacterium austroafricanum (Mycobacterium austroafricanum)).